The primary structure comprises 162 residues: NADH-quinone oxidoreductase subunit I 2 (162 aa).

2 consecutive 4Fe-4S ferredoxin-type domains span residues 53–83 and 93–122; these read LRRY…IESE and TRYD…ETRI. Residues Cys63, Cys66, Cys69, Cys73, Cys102, Cys105, Cys108, and Cys112 each contribute to the [4Fe-4S] cluster site.

The protein belongs to the complex I 23 kDa subunit family. In terms of assembly, NDH-1 is composed of 14 different subunits. Subunits NuoA, H, J, K, L, M, N constitute the membrane sector of the complex. [4Fe-4S] cluster serves as cofactor.

The protein localises to the cell inner membrane. The catalysed reaction is a quinone + NADH + 5 H(+)(in) = a quinol + NAD(+) + 4 H(+)(out). Functionally, NDH-1 shuttles electrons from NADH, via FMN and iron-sulfur (Fe-S) centers, to quinones in the respiratory chain. The immediate electron acceptor for the enzyme in this species is believed to be ubiquinone. Couples the redox reaction to proton translocation (for every two electrons transferred, four hydrogen ions are translocated across the cytoplasmic membrane), and thus conserves the redox energy in a proton gradient. The chain is NADH-quinone oxidoreductase subunit I 2 from Nitrosospira multiformis (strain ATCC 25196 / NCIMB 11849 / C 71).